Here is a 284-residue protein sequence, read N- to C-terminus: L-ribulose-5-phosphate 3-epimerase UlaE (284 aa).

This sequence belongs to the L-ribulose-5-phosphate 3-epimerase family.

It catalyses the reaction L-ribulose 5-phosphate = L-xylulose 5-phosphate. The protein operates within cofactor degradation; L-ascorbate degradation; D-xylulose 5-phosphate from L-ascorbate: step 3/4. In terms of biological role, catalyzes the isomerization of L-xylulose-5-phosphate to L-ribulose-5-phosphate. Is involved in the anaerobic L-ascorbate utilization. The sequence is that of L-ribulose-5-phosphate 3-epimerase UlaE from Shigella sonnei (strain Ss046).